The following is a 276-amino-acid chain: Putative metal-binding protein CT_415 (276 aa).

An N-terminal signal peptide occupies residues 1 to 18 (MRLLFLLLFSLGITCSYG). A divalent metal cation contacts are provided by H59, H121, H185, and D256.

Belongs to the bacterial solute-binding protein 9 family.

It localises to the periplasm. Its function is as follows. Part of an ATP-binding cassette (ABC) transport system involved in metal import. Binds a metal with high affinity and specificity and delivers it to the membrane permease for translocation into the cytoplasm. This chain is Putative metal-binding protein CT_415, found in Chlamydia trachomatis serovar D (strain ATCC VR-885 / DSM 19411 / UW-3/Cx).